The following is a 427-amino-acid chain: 3-phosphoshikimate 1-carboxyvinyltransferase (427 aa).

3 residues coordinate 3-phosphoshikimate: Lys-22, Ser-23, and Arg-27. Residue Lys-22 participates in phosphoenolpyruvate binding. Phosphoenolpyruvate is bound by residues Gly-96 and Arg-124. Positions 169, 170, 171, 197, 313, 336, and 340 each coordinate 3-phosphoshikimate. Gln-171 is a phosphoenolpyruvate binding site. Asp-313 functions as the Proton acceptor in the catalytic mechanism. Residues Arg-344, Arg-386, and Lys-411 each coordinate phosphoenolpyruvate.

The protein belongs to the EPSP synthase family. In terms of assembly, monomer.

Its subcellular location is the cytoplasm. The enzyme catalyses 3-phosphoshikimate + phosphoenolpyruvate = 5-O-(1-carboxyvinyl)-3-phosphoshikimate + phosphate. It functions in the pathway metabolic intermediate biosynthesis; chorismate biosynthesis; chorismate from D-erythrose 4-phosphate and phosphoenolpyruvate: step 6/7. In terms of biological role, catalyzes the transfer of the enolpyruvyl moiety of phosphoenolpyruvate (PEP) to the 5-hydroxyl of shikimate-3-phosphate (S3P) to produce enolpyruvyl shikimate-3-phosphate and inorganic phosphate. This Salmonella dublin (strain CT_02021853) protein is 3-phosphoshikimate 1-carboxyvinyltransferase.